We begin with the raw amino-acid sequence, 131 residues long: UPF0102 protein YraN (131 aa).

Over residues 1 to 19 (MATVPTRSGSPRQLTTKQT) the composition is skewed to polar residues. The disordered stretch occupies residues 1 to 20 (MATVPTRSGSPRQLTTKQTG).

Belongs to the UPF0102 family.

The sequence is that of UPF0102 protein YraN from Escherichia fergusonii (strain ATCC 35469 / DSM 13698 / CCUG 18766 / IAM 14443 / JCM 21226 / LMG 7866 / NBRC 102419 / NCTC 12128 / CDC 0568-73).